Consider the following 415-residue polypeptide: NAD-dependent protein deacetylase hst4 (415 aa).

The segment at 1-26 (MKVEEHVPLIQESRKRKCQSSENASK) is disordered. The Deacetylase sirtuin-type domain maps to 40 to 337 (TGNENVDLSP…RRLKPLLDAP (298 aa)). Residues 65-84 (GAGI…EGLF) and 153-156 (QNID) each bind NAD(+). The Proton acceptor role is filled by His-184. Positions 192, 195, 214, and 217 each coordinate Zn(2+). NAD(+) contacts are provided by residues 273-275 (GTS), 303-305 (NYD), and Leu-323.

This sequence belongs to the sirtuin family. Class I subfamily. Zn(2+) serves as cofactor.

Its subcellular location is the nucleus. It localises to the nucleolus. It carries out the reaction N(6)-acetyl-L-lysyl-[protein] + NAD(+) + H2O = 2''-O-acetyl-ADP-D-ribose + nicotinamide + L-lysyl-[protein]. NAD-dependent histone deacetylase, which contributes to both telomeric and centromeric silencing, proper cell cycle progression, DNA damage control, recombination, and genomic maintenance. In Schizosaccharomyces pombe (strain 972 / ATCC 24843) (Fission yeast), this protein is NAD-dependent protein deacetylase hst4 (hst4).